A 2417-amino-acid chain; its full sequence is Protein pad-1 (2417 aa).

Disordered regions lie at residues Ser409–Gly437, Ser449–Glu475, Thr994–Thr1029, and Ser1957–Pro2032. Low complexity-rich tracts occupy residues Thr456–Ser468 and Asp1002–Ala1024. Positions Asp1969–Leu1982 are enriched in polar residues. Residues Ser2003–Ser2014 show a composition bias toward basic and acidic residues. The span at Ser2015–Thr2025 shows a compositional bias: polar residues.

This sequence belongs to the DOP1 family.

In terms of biological role, may be involved in protein traffic between late Golgi and early endosomes. Essential for cell patterning during gastrulation. In Caenorhabditis elegans, this protein is Protein pad-1 (pad-1).